The following is a 519-amino-acid chain: Putative cysteine ligase BshC (519 aa).

Coiled coils occupy residues 51–71 and 440–464; these read LNAL…SLKE and TKLN…HEQA.

The protein belongs to the BshC family.

Involved in bacillithiol (BSH) biosynthesis. May catalyze the last step of the pathway, the addition of cysteine to glucosamine malate (GlcN-Mal) to generate BSH. The polypeptide is Putative cysteine ligase BshC (Exiguobacterium sibiricum (strain DSM 17290 / CCUG 55495 / CIP 109462 / JCM 13490 / 255-15)).